The sequence spans 235 residues: Phosphoribosylaminoimidazole-succinocarboxamide synthase (235 aa).

It belongs to the SAICAR synthetase family.

It catalyses the reaction 5-amino-1-(5-phospho-D-ribosyl)imidazole-4-carboxylate + L-aspartate + ATP = (2S)-2-[5-amino-1-(5-phospho-beta-D-ribosyl)imidazole-4-carboxamido]succinate + ADP + phosphate + 2 H(+). Its pathway is purine metabolism; IMP biosynthesis via de novo pathway; 5-amino-1-(5-phospho-D-ribosyl)imidazole-4-carboxamide from 5-amino-1-(5-phospho-D-ribosyl)imidazole-4-carboxylate: step 1/2. The protein is Phosphoribosylaminoimidazole-succinocarboxamide synthase of Chlorobaculum tepidum (strain ATCC 49652 / DSM 12025 / NBRC 103806 / TLS) (Chlorobium tepidum).